The following is a 152-amino-acid chain: Ribosome maturation factor RimP (152 aa).

Belongs to the RimP family.

Its subcellular location is the cytoplasm. Required for maturation of 30S ribosomal subunits. This Burkholderia cenocepacia (strain ATCC BAA-245 / DSM 16553 / LMG 16656 / NCTC 13227 / J2315 / CF5610) (Burkholderia cepacia (strain J2315)) protein is Ribosome maturation factor RimP.